The sequence spans 133 residues: U-scoloptoxin(05)-Sa1a (133 aa).

An N-terminal signal peptide occupies residues 1–24 (MPSLCIIALFGTLTFYTLIPSIHT).

Belongs to the scoloptoxin-05 family. In terms of processing, contains 5 disulfide bonds. As to expression, expressed by the venom gland.

It localises to the secreted. In Scolopendra alternans (Florida Keys giant centipede), this protein is U-scoloptoxin(05)-Sa1a.